The sequence spans 185 residues: Large ribosomal subunit protein uL18 (185 aa).

This sequence belongs to the universal ribosomal protein uL18 family. In terms of assembly, part of the 50S ribosomal subunit. Contacts the 5S and 23S rRNAs.

Functionally, this is one of the proteins that bind and probably mediate the attachment of the 5S RNA into the large ribosomal subunit, where it forms part of the central protuberance. This Halorubrum lacusprofundi (strain ATCC 49239 / DSM 5036 / JCM 8891 / ACAM 34) protein is Large ribosomal subunit protein uL18.